Consider the following 63-residue polypeptide: Large ribosomal subunit protein uL29 (63 aa).

The protein belongs to the universal ribosomal protein uL29 family.

In Vibrio campbellii (strain ATCC BAA-1116), this protein is Large ribosomal subunit protein uL29.